We begin with the raw amino-acid sequence, 332 residues long: Glyoxylate reductase (332 aa).

Residues 155–158 (MGRI) and 236–238 (TSR) contribute to the NADP(+) site. Catalysis depends on residues Arg-238 and Glu-267. Residue His-286 is the Proton donor of the active site. 286 to 288 (HAA) contributes to the NADP(+) binding site.

The protein belongs to the D-isomer specific 2-hydroxyacid dehydrogenase family. GyaR subfamily. In terms of assembly, homodimer.

It is found in the cytoplasm. The enzyme catalyses glycolate + NAD(+) = glyoxylate + NADH + H(+). The sequence is that of Glyoxylate reductase from Korarchaeum cryptofilum (strain OPF8).